The chain runs to 371 residues: ADP-ribosylarginine hydrolase Tri1 (371 aa).

Residues 1-61 (MIDLRSPNAL…LQSRACTLTP (61 aa)) are N-terminal extension. Residues 70-362 (GALLGLAIGD…LFDRAPQVDE (293 aa)) are ADP-ribosyl hydrolase domain. Mg(2+)-binding residues include T112, D113, D114, D157, and D313.

Belongs to the ADP-ribosylglycohydrolase family. The cofactor is Mg(2+).

It carries out the reaction N(omega)-(ADP-D-ribosyl)-L-arginyl-[protein] + H2O = ADP-D-ribose + L-arginyl-[protein]. In terms of biological role, immunity component of an interbacterial competition system (also called effector-immunity systems). Expression in E.coli neutralizes the toxic effects of non-cognate S.proteamaculans effector protein Tre1 (Tre1-Sp); cannot be co-purified with Tre1-Sp from E.coli, suggesting they do not form a stable complex. Probably acts as an arginine mono-ADP-ribosylhydrolase, mediating the removal of mono-ADP-ribose attached to arginine residues on proteins. Probably de-ADP-ribosylates FtsZ and possibly other proteins; the ability to hydrolyze ADP-ribosyl moieties is not essential for neutralization of its cognate toxin, strongly suggesting its N-terminal extension occludes the active site of cognate toxin Tre1. This Pseudomonas putida (strain GB-1) protein is ADP-ribosylarginine hydrolase Tri1.